We begin with the raw amino-acid sequence, 86 residues long: Large ribosomal subunit protein uL10 (86 aa).

The protein belongs to the universal ribosomal protein uL10 family. As to quaternary structure, part of the ribosomal stalk of the 50S ribosomal subunit. The N-terminus interacts with L11 and the large rRNA to form the base of the stalk. The C-terminus forms an elongated spine to which L12 dimers bind in a sequential fashion forming a multimeric L10(L12)X complex.

Its function is as follows. Forms part of the ribosomal stalk, playing a central role in the interaction of the ribosome with GTP-bound translation factors. The chain is Large ribosomal subunit protein uL10 (rplJ) from Serratia marcescens.